A 938-amino-acid chain; its full sequence is Isoleucine--tRNA ligase (938 aa).

A 'HIGH' region motif is present at residues P58–H68. E561 is an L-isoleucyl-5'-AMP binding site. Residues K602–S606 carry the 'KMSKS' region motif. Residue K605 participates in ATP binding. Zn(2+) is bound by residues C901, C904, C921, and C924.

Belongs to the class-I aminoacyl-tRNA synthetase family. IleS type 1 subfamily. Monomer. It depends on Zn(2+) as a cofactor.

Its subcellular location is the cytoplasm. It catalyses the reaction tRNA(Ile) + L-isoleucine + ATP = L-isoleucyl-tRNA(Ile) + AMP + diphosphate. Catalyzes the attachment of isoleucine to tRNA(Ile). As IleRS can inadvertently accommodate and process structurally similar amino acids such as valine, to avoid such errors it has two additional distinct tRNA(Ile)-dependent editing activities. One activity is designated as 'pretransfer' editing and involves the hydrolysis of activated Val-AMP. The other activity is designated 'posttransfer' editing and involves deacylation of mischarged Val-tRNA(Ile). This Yersinia pestis bv. Antiqua (strain Angola) protein is Isoleucine--tRNA ligase.